We begin with the raw amino-acid sequence, 96 residues long: Myosuppressin (96 aa).

Positions 1–24 (MALGNGYYCAVVCVVLACASVVLC) are cleaved as a signal peptide. The propeptide occupies 25-80 (APAQLCAGAADDDPRAARFCQALNTFLELYAEAAGEQVPEYQALVRDYPQLLDTGM). Residue glutamine 83 is modified to Pyrrolidone carboxylic acid; partial. Phenylalanine 92 is modified (phenylalanine amide). Residue arginine 96 is a propeptide.

It belongs to the myosuppressin family. In terms of tissue distribution, expressed in corpora cardiaca (CC), corpora allata (CA), antennal lobe (AL) and gnathal ganglion (GNG) (at protein level). In its non-pyroglutamate form, expression in GNG detected in all animals, in AL, CC and in CA in most animals (at protein level). In its pyroglutamate form, expression in CC, CA and GNG detected in all animals, in AL in some animals (at protein level).

The protein localises to the secreted. Its function is as follows. Myoinhibiting neuropeptide. This Agrotis ipsilon (Black cutworm moth) protein is Myosuppressin.